The primary structure comprises 341 residues: Two-component response regulator EHD1 (341 aa).

The region spanning 12–127 (RVLVIDDDCS…ELSNIWQHIF (116 aa)) is the Response regulatory domain. Asp-63 bears the 4-aspartylphosphate mark. The HTH myb-type domain maps to 195–254 (DLGKSRLTWTTQLHRQFIAAVNHLGEDKAVPKKILGIMKVKHLTREQVASHLQKYRMQLK). A DNA-binding region (H-T-H motif) is located at residues 225 to 250 (PKKILGIMKVKHLTREQVASHLQKYR).

Two-component system major event consists of a His-to-Asp phosphorelay between a sensor histidine kinase (HK) and a response regulator (RR). In plants, the His-to-Asp phosphorelay involves an additional intermediate named Histidine-containing phosphotransfer protein (HPt). This multistep phosphorelay consists of a His-Asp-His-Asp sequential transfer of a phosphate group between first a His and an Asp of the HK protein, followed by the transfer to a conserved His of the HPt protein and finally the transfer to an Asp in the receiver domain of the RR protein.

The protein resides in the nucleus. Transcriptional activator that acts as a floral inducer to promote short-day (SD) flowering pathway. Activates Hd3a and other FT-like genes independently from Hd1. May also activate MADS-box transcription factors involved in flowering regulation. The protein is Two-component response regulator EHD1 (EHD1) of Oryza sativa subsp. indica (Rice).